Reading from the N-terminus, the 352-residue chain is Transcription factor MYB86 (352 aa).

HTH myb-type domains lie at 9–61 (KQKL…INYL) and 62–116 (RPDL…KKKL). 2 DNA-binding regions (H-T-H motif) span residues 37-61 (WSSV…INYL) and 89-112 (WSQI…NSCL).

Expressed in stems, flowers and seeds. Weakly expressed in leaves and roots.

It is found in the nucleus. Probable transcription factor. In Arabidopsis thaliana (Mouse-ear cress), this protein is Transcription factor MYB86 (MYB86).